Here is a 739-residue protein sequence, read N- to C-terminus: Polyribonucleotide nucleotidyltransferase (739 aa).

Asp-487 and Asp-493 together coordinate Mg(2+). A KH domain is found at 554–613; the sequence is PRIETMQIPTDKIRDVIGTGGKVIREIVEKTGAKINIEDTGVVKIASADGKAIKAAYNWI. An S1 motif domain is found at 623 to 691; that stretch reads GVIYDGTIVK…DRGKIRLSMK (69 aa). The disordered stretch occupies residues 694 to 739; the sequence is DQQTGEDITDKIKAQRDAERAERGDEPREPREGGRHRGERRREAGE. A compositionally biased stretch (basic and acidic residues) spans 701 to 739; it reads ITDKIKAQRDAERAERGDEPREPREGGRHRGERRREAGE.

The protein belongs to the polyribonucleotide nucleotidyltransferase family. The cofactor is Mg(2+).

It localises to the cytoplasm. The catalysed reaction is RNA(n+1) + phosphate = RNA(n) + a ribonucleoside 5'-diphosphate. Functionally, involved in mRNA degradation. Catalyzes the phosphorolysis of single-stranded polyribonucleotides processively in the 3'- to 5'-direction. The protein is Polyribonucleotide nucleotidyltransferase of Methylobacterium radiotolerans (strain ATCC 27329 / DSM 1819 / JCM 2831 / NBRC 15690 / NCIMB 10815 / 0-1).